The chain runs to 713 residues: MFNKVVKEFQWGQHKVRLETGEVARQASGAVIVDVEDTVVLATVVGAKSAKPGQDFFPLTVDYLEKTYSAGKIPGGFFRREGRPSEHETLTSRLIDRPLRPLFPEGFYNEVQVVIHVLSVNPEIPADIPALIGASAALAVSGLPFNGPVGAARVAYIDNAYVLNPTRDQIKASSLDLVVAGTERAVLMVESEADQLSEDVMLGAVVFGHEQMQIAIDAIHELVRDGGKPEWDWQPAPKNEALIARVTELAQNDLLAAYQLRDKQARSAKLKEVYAATSAKLEEDALAAGTVAADKATVGNILFDIEAKIVRSQILNGEPRIDGRDTRTVRPIEIRTGVLPRTHGSALFTRGETQALVVATLGTKGDEQIIDALEGEYRERFMLHYNMPPFATGETGRVGSPKRREIGHGRLAKRALVKCLPSADEFGYSIRVVSEITESNGSSSMASVCGGCLALMDAGVPMKAHVAGIAMGLILEGNKFAVLTDILGDEDHLGDMDFKVAGTEQGVTALQMDIKIQGITKEIMQVALAQAKEGRMHILGKMTSAVSGANTQLSEFAPRMITIKINPEKIRDVIGKGGSVIRALTEETGTTIDISDDGVVTIASTSSDGMAEAKKRIEQITAEIEVGQVYEGTVLKLLDFGAIVNLLPGKDGLLHISEIVNERVKDINDYLKEGQQVKVKVIQTDEKGRVRLSAKALLNEAAAAAQSDTPPQQ.

Mg(2+) contacts are provided by Asp491 and Asp497. Positions 558–617 constitute a KH domain; the sequence is PRMITIKINPEKIRDVIGKGGSVIRALTEETGTTIDISDDGVVTIASTSSDGMAEAKKRI. The S1 motif domain occupies 627 to 695; sequence GQVYEGTVLK…EKGRVRLSAK (69 aa).

Belongs to the polyribonucleotide nucleotidyltransferase family. Mg(2+) serves as cofactor.

The protein localises to the cytoplasm. It catalyses the reaction RNA(n+1) + phosphate = RNA(n) + a ribonucleoside 5'-diphosphate. Its function is as follows. Involved in mRNA degradation. Catalyzes the phosphorolysis of single-stranded polyribonucleotides processively in the 3'- to 5'-direction. The polypeptide is Polyribonucleotide nucleotidyltransferase (Burkholderia cenocepacia (strain ATCC BAA-245 / DSM 16553 / LMG 16656 / NCTC 13227 / J2315 / CF5610) (Burkholderia cepacia (strain J2315))).